Here is a 202-residue protein sequence, read N- to C-terminus: Solute carrier family 66 member 3 (202 aa).

Residues methionine 1–alanine 19 form the signal peptide. 4 consecutive transmembrane segments (helical) span residues serine 33–leucine 53, leucine 64–phenylalanine 84, leucine 94–isoleucine 114, and leucine 171–valine 191.

Its subcellular location is the membrane. This Mus musculus (Mouse) protein is Solute carrier family 66 member 3 (Slc66a3).